Reading from the N-terminus, the 283-residue chain is 4-hydroxy-3-methylbut-2-enyl diphosphate reductase (283 aa).

C12 contributes to the [4Fe-4S] cluster binding site. The (2E)-4-hydroxy-3-methylbut-2-enyl diphosphate site is built by H40 and H73. Dimethylallyl diphosphate-binding residues include H40 and H73. Residues H40 and H73 each contribute to the isopentenyl diphosphate site. C95 is a binding site for [4Fe-4S] cluster. (2E)-4-hydroxy-3-methylbut-2-enyl diphosphate is bound at residue H123. H123 is a binding site for dimethylallyl diphosphate. Residue H123 participates in isopentenyl diphosphate binding. E125 functions as the Proton donor in the catalytic mechanism. (2E)-4-hydroxy-3-methylbut-2-enyl diphosphate is bound at residue T161. C189 is a binding site for [4Fe-4S] cluster. (2E)-4-hydroxy-3-methylbut-2-enyl diphosphate contacts are provided by S217, N219, and S261. Dimethylallyl diphosphate-binding residues include S217, N219, and S261. Positions 217, 219, and 261 each coordinate isopentenyl diphosphate.

It belongs to the IspH family. The cofactor is [4Fe-4S] cluster.

The catalysed reaction is isopentenyl diphosphate + 2 oxidized [2Fe-2S]-[ferredoxin] + H2O = (2E)-4-hydroxy-3-methylbut-2-enyl diphosphate + 2 reduced [2Fe-2S]-[ferredoxin] + 2 H(+). It carries out the reaction dimethylallyl diphosphate + 2 oxidized [2Fe-2S]-[ferredoxin] + H2O = (2E)-4-hydroxy-3-methylbut-2-enyl diphosphate + 2 reduced [2Fe-2S]-[ferredoxin] + 2 H(+). It participates in isoprenoid biosynthesis; dimethylallyl diphosphate biosynthesis; dimethylallyl diphosphate from (2E)-4-hydroxy-3-methylbutenyl diphosphate: step 1/1. It functions in the pathway isoprenoid biosynthesis; isopentenyl diphosphate biosynthesis via DXP pathway; isopentenyl diphosphate from 1-deoxy-D-xylulose 5-phosphate: step 6/6. Catalyzes the conversion of 1-hydroxy-2-methyl-2-(E)-butenyl 4-diphosphate (HMBPP) into a mixture of isopentenyl diphosphate (IPP) and dimethylallyl diphosphate (DMAPP). Acts in the terminal step of the DOXP/MEP pathway for isoprenoid precursor biosynthesis. This chain is 4-hydroxy-3-methylbut-2-enyl diphosphate reductase, found in Geobacter sp. (strain M21).